The sequence spans 347 residues: S-adenosylmethionine decarboxylase proenzyme 4 (347 aa).

Active-site residues include Glu-7 and Glu-10. Glu-66 contacts substrate. The active-site Schiff-base intermediate with substrate; via pyruvic acid is the Ser-67. Ser-67 carries the post-translational modification Pyruvic acid (Ser); by autocatalysis. Cys-81 acts as the Proton donor; for catalytic activity in catalysis. Catalysis depends on proton acceptor; for processing activity residues Ser-237 and His-250. Glu-254 serves as a coordination point for substrate.

It belongs to the eukaryotic AdoMetDC family. Pyruvate serves as cofactor. In terms of processing, is synthesized initially as an inactive proenzyme. Formation of the active enzyme involves a self-maturation process in which the active site pyruvoyl group is generated from an internal serine residue via an autocatalytic post-translational modification. Two non-identical subunits are generated from the proenzyme in this reaction, and the pyruvate is formed at the N-terminus of the alpha chain, which is derived from the carboxyl end of the proenzyme. The post-translation cleavage follows an unusual pathway, termed non-hydrolytic serinolysis, in which the side chain hydroxyl group of the serine supplies its oxygen atom to form the C-terminus of the beta chain, while the remainder of the serine residue undergoes an oxidative deamination to produce ammonia and the pyruvoyl group blocking the N-terminus of the alpha chain.

The catalysed reaction is S-adenosyl-L-methionine + H(+) = S-adenosyl 3-(methylsulfanyl)propylamine + CO2. It participates in amine and polyamine biosynthesis; S-adenosylmethioninamine biosynthesis; S-adenosylmethioninamine from S-adenosyl-L-methionine: step 1/1. Its function is as follows. Essential for biosynthesis of the polyamines spermidine and spermine. Essential for polyamine homeostasis, and normal plant embryogenesis, growth and development. This is S-adenosylmethionine decarboxylase proenzyme 4 from Arabidopsis thaliana (Mouse-ear cress).